The primary structure comprises 210 residues: Pre-mRNA-splicing factor 38 (210 aa).

The segment at 181-210 (PLSSSSDEEDDDEEQISKLESNEGAVDRNI) is disordered. A compositionally biased stretch (basic and acidic residues) spans 195–210 (QISKLESNEGAVDRNI).

This sequence belongs to the PRP38 family. In terms of assembly, component of the 25S U4/U6.U5 tri-snRNP particle, a subcomplex of the spliceosome.

Its subcellular location is the nucleus. Its function is as follows. Required for pre-mRNA splicing and maintenance of stable U6 small nuclear RNA levels. Implicated in the formation of stable and biologically active snRNP structures. As part of the U4/U6.U5 tri-snRNP particle, dispensible for spliceosome assembly, but required for conformational changes, which result in U4 snRNA release and the subsequent catalytic activation of the spliceosome. The protein is Pre-mRNA-splicing factor 38 of Schizosaccharomyces pombe (strain 972 / ATCC 24843) (Fission yeast).